The primary structure comprises 235 residues: MKIIQVENQVEGGKVALELLKEKLAQGAKTLGLATGSSPEEFYKQIVESDLDFSEMTSVNLDEYVGLQEEDPQSYRYFMNQHLFNQKPFKASFLPNGAAKDLEAEVARYNQLLTEHPADLQILGIGTNGHIGFNEPGTSFDSQTHLVDLTPSTIQSNARFFDKMEDVPTQAISMGIGNILNAKSIILFAYGSAKAKAIAGTVEGEVTEELPGSALQKHPDVVIIADKEALSLLKH.

Residue Asp-62 is the Proton acceptor; for enolization step of the active site. Catalysis depends on Asn-128, which acts as the For ring-opening step. The active-site Proton acceptor; for ring-opening step is His-130. Residue Glu-135 is the For ring-opening step of the active site.

Belongs to the glucosamine/galactosamine-6-phosphate isomerase family. NagB subfamily.

The catalysed reaction is alpha-D-glucosamine 6-phosphate + H2O = beta-D-fructose 6-phosphate + NH4(+). It functions in the pathway amino-sugar metabolism; N-acetylneuraminate degradation; D-fructose 6-phosphate from N-acetylneuraminate: step 5/5. In terms of biological role, catalyzes the reversible isomerization-deamination of glucosamine 6-phosphate (GlcN6P) to form fructose 6-phosphate (Fru6P) and ammonium ion. The chain is Glucosamine-6-phosphate deaminase from Streptococcus sanguinis (strain SK36).